Here is a 252-residue protein sequence, read N- to C-terminus: Imidazole glycerol phosphate synthase subunit HisF (252 aa).

Active-site residues include aspartate 11 and aspartate 130.

The protein belongs to the HisA/HisF family. Heterodimer of HisH and HisF.

It is found in the cytoplasm. The enzyme catalyses 5-[(5-phospho-1-deoxy-D-ribulos-1-ylimino)methylamino]-1-(5-phospho-beta-D-ribosyl)imidazole-4-carboxamide + L-glutamine = D-erythro-1-(imidazol-4-yl)glycerol 3-phosphate + 5-amino-1-(5-phospho-beta-D-ribosyl)imidazole-4-carboxamide + L-glutamate + H(+). It functions in the pathway amino-acid biosynthesis; L-histidine biosynthesis; L-histidine from 5-phospho-alpha-D-ribose 1-diphosphate: step 5/9. In terms of biological role, IGPS catalyzes the conversion of PRFAR and glutamine to IGP, AICAR and glutamate. The HisF subunit catalyzes the cyclization activity that produces IGP and AICAR from PRFAR using the ammonia provided by the HisH subunit. This Bacillus cytotoxicus (strain DSM 22905 / CIP 110041 / 391-98 / NVH 391-98) protein is Imidazole glycerol phosphate synthase subunit HisF.